Consider the following 147-residue polypeptide: Small ribosomal subunit protein bS6 (147 aa).

The interval 107–147 is disordered; sequence KEGRERKARPARAERRDDTEAEDLSDEEGVEAEDFEEEQGV. Over residues 125 to 147 the composition is skewed to acidic residues; that stretch reads TEAEDLSDEEGVEAEDFEEEQGV.

The protein belongs to the bacterial ribosomal protein bS6 family.

Its function is as follows. Binds together with bS18 to 16S ribosomal RNA. The chain is Small ribosomal subunit protein bS6 from Cellvibrio japonicus (strain Ueda107) (Pseudomonas fluorescens subsp. cellulosa).